The primary structure comprises 257 residues: Major prion protein (257 aa).

A signal peptide spans methionine 1–cysteine 24. Residues lysine 25–alanine 234 form an interaction with GRB2, ERI3 and SYN1 region. The segment at proline 28–methionine 113 is disordered. 5 consecutive repeat copies span residues proline 54–glutamine 62, proline 63–glutamine 70, proline 71–glutamine 78, proline 79–glutamine 86, and proline 87–glutamine 95. Residues proline 54–glutamine 95 form a 5 X 8 AA tandem repeats of P-H-G-G-G-W-G-Q region. Residues glutamine 55–histidine 100 are compositionally biased toward gly residues. Cu(2+) contacts are provided by histidine 64, glycine 65, glycine 66, histidine 72, glycine 73, glycine 74, histidine 80, glycine 81, glycine 82, histidine 88, glycine 90, and glycine 91. A disulfide bond links cysteine 183 and cysteine 218. Asparagine 185 and asparagine 201 each carry an N-linked (GlcNAc...) asparagine glycan. Residue alanine 234 is the site of GPI-anchor amidated alanine attachment. Positions serine 235–glycine 257 are cleaved as a propeptide — removed in mature form.

It belongs to the prion family. As to quaternary structure, monomer and homodimer. Has a tendency to aggregate into amyloid fibrils containing a cross-beta spine, formed by a steric zipper of superposed beta-strands. Soluble oligomers may represent an intermediate stage on the path to fibril formation. Copper binding may promote oligomerization. Interacts with GRB2, APP, ERI3/PRNPIP and SYN1. Mislocalized cytosolically exposed PrP interacts with MGRN1; this interaction alters MGRN1 subcellular location and causes lysosomal enlargement. Interacts with KIAA1191.

It is found in the cell membrane. It localises to the golgi apparatus. In terms of biological role, its primary physiological function is unclear. Has cytoprotective activity against internal or environmental stresses. May play a role in neuronal development and synaptic plasticity. May be required for neuronal myelin sheath maintenance. May play a role in iron uptake and iron homeostasis. Soluble oligomers are toxic to cultured neuroblastoma cells and induce apoptosis (in vitro). Association with GPC1 (via its heparan sulfate chains) targets PRNP to lipid rafts. Also provides Cu(2+) or Zn(2+) for the ascorbate-mediated GPC1 deaminase degradation of its heparan sulfate side chains. The sequence is that of Major prion protein (PRNP) from Sus scrofa (Pig).